Consider the following 358-residue polypeptide: tRNA-specific 2-thiouridylase MnmA (358 aa).

Residues 10 to 17 (AMSGGVDS) and Met36 contribute to the ATP site. Cys105 functions as the Nucleophile in the catalytic mechanism. Cys105 and Cys202 are disulfide-bonded. Residue Gly129 coordinates ATP. An interaction with tRNA region spans residues 152-154 (KDQ). Residue Cys202 is the Cysteine persulfide intermediate of the active site. The interaction with tRNA stretch occupies residues 308 to 309 (RY).

This sequence belongs to the MnmA/TRMU family.

The protein localises to the cytoplasm. It catalyses the reaction S-sulfanyl-L-cysteinyl-[protein] + uridine(34) in tRNA + AH2 + ATP = 2-thiouridine(34) in tRNA + L-cysteinyl-[protein] + A + AMP + diphosphate + H(+). Its function is as follows. Catalyzes the 2-thiolation of uridine at the wobble position (U34) of tRNA, leading to the formation of s(2)U34. This is tRNA-specific 2-thiouridylase MnmA from Magnetococcus marinus (strain ATCC BAA-1437 / JCM 17883 / MC-1).